Reading from the N-terminus, the 418-residue chain is eIF5-mimic protein 2 (418 aa).

Over residues 1 to 14 the composition is skewed to polar residues; sequence MNQKQQKPTLSGQR. Residues 1-25 are disordered; it reads MNQKQQKPTLSGQRFKTRKRDEKER. Residues 246–413 enclose the W2 domain; the sequence is NQQTIGARKE…KNAEEESESE (168 aa).

This sequence belongs to the BZW family.

In terms of biological role, translation initiation regulator which may repress repeat-associated non-AUG (RAN) initiated translation probably by acting as a competitive inhibitor of eukaryotic translation initiation factor 5 (EIF5) function. Enhances histone H4 gene transcription but does not seem to bind DNA directly. The protein is eIF5-mimic protein 2 (BZW1) of Gallus gallus (Chicken).